Reading from the N-terminus, the 365-residue chain is uncharacterized protein (365 aa).

The next 3 membrane-spanning stretches (helical) occupy residues 105-125 (TGNW…QCWL), 151-171 (ILTT…SLTI), and 187-207 (IFLI…SLIF).

The protein resides in the cell membrane. This is an uncharacterized protein from Mycoplasma genitalium (strain ATCC 33530 / DSM 19775 / NCTC 10195 / G37) (Mycoplasmoides genitalium).